Consider the following 364-residue polypeptide: SH3 and cysteine-rich domain-containing protein 3 (364 aa).

Disordered stretches follow at residues methionine 1 to proline 89 and asparagine 189 to proline 244. The segment covering tyrosine 64 to proline 78 has biased composition (acidic residues). Residues proline 89–cysteine 140 form a Phorbol-ester/DAG-type zinc finger. The segment covering glutamate 212 to lysine 242 has biased composition (basic and acidic residues). SH3 domains are found at residues glutamine 247 to alanine 306 and glycine 307 to isoleucine 364.

In terms of assembly, interacts (via SH3 domains) with the calcium channels CACNA1S and CACNA1C. Component of a calcium channel complex with CACNA1S and CACNB1. Component of a calcium channel complex with CACNA1C and CACNB1.

The protein localises to the cytoplasm. It localises to the cell membrane. Its subcellular location is the sarcolemma. The protein resides in the T-tubule. Functionally, required for normal excitation-contraction coupling in skeletal muscle and for normal muscle contraction in response to membrane depolarization. Required for normal Ca(2+) release from the sarcplasmic reticulum, which ultimately leads to muscle contraction. Probably functions via its effects on muscle calcium channels. Increases CACNA1S channel activity, in addition to its role in enhancing the expression of CACNA1S at the cell membrane. Has a redundant role in promoting the expression of the calcium channel CACNA1S at the cell membrane. Slows down the inactivation rate of the calcium channel CACNA1C. This Homo sapiens (Human) protein is SH3 and cysteine-rich domain-containing protein 3 (STAC3).